We begin with the raw amino-acid sequence, 405 residues long: Endo-1,4-beta-xylanase 5 (405 aa).

The signal sequence occupies residues 1-22 (MTRLATLITLAGLLAVSPGAYA). N-linked (GlcNAc...) asparagine glycans are attached at residues N27 and N69. One can recognise a GH10 domain in the interval 32 to 352 (STGAEGLNSL…KPAYTSVSSL (321 aa)). E166 functions as the Proton donor in the catalytic mechanism. A glycan (N-linked (GlcNAc...) asparagine) is linked at N171. E273 (nucleophile) is an active-site residue. Residues C302 and C308 are joined by a disulfide bond. G380 carries the GPI-anchor amidated glycine lipid modification. Positions 381–405 (AGRETVSIAGLTLALSSLAFGMFML) are cleaved as a propeptide — removed in mature form.

This sequence belongs to the glycosyl hydrolase 10 (cellulase F) family.

It is found in the cell membrane. It localises to the secreted. The catalysed reaction is Endohydrolysis of (1-&gt;4)-beta-D-xylosidic linkages in xylans.. The protein operates within glycan degradation; xylan degradation. Its function is as follows. Endo-1,4-beta-xylanase involved in the hydrolysis of xylan, a major structural heterogeneous polysaccharide found in plant biomass representing the second most abundant polysaccharide in the biosphere, after cellulose. The chain is Endo-1,4-beta-xylanase 5 (XYL5) from Pyricularia grisea (Crabgrass-specific blast fungus).